A 1295-amino-acid chain; its full sequence is Phosphoribosylformylglycinamidine synthase (1295 aa).

The disordered stretch occupies residues 305–327 (WPGAATGSGGEIRDEGATGRGAK). Residues 307–318 (GAATGSGGEIRD), 386–388 (TGY), and alanine 678 each bind ATP. Residues aspartate 679, glutamate 718, asparagine 722, and aspartate 884 each coordinate Mg(2+). Serine 886 is a binding site for ATP. The region spanning 1042 to 1295 (VAVLREQGVN…IFRNARKQLG (254 aa)) is the Glutamine amidotransferase type-1 domain. The active-site Nucleophile is the cysteine 1135. Active-site residues include histidine 1260 and glutamate 1262.

In the N-terminal section; belongs to the FGAMS family. In terms of assembly, monomer.

It is found in the cytoplasm. The catalysed reaction is N(2)-formyl-N(1)-(5-phospho-beta-D-ribosyl)glycinamide + L-glutamine + ATP + H2O = 2-formamido-N(1)-(5-O-phospho-beta-D-ribosyl)acetamidine + L-glutamate + ADP + phosphate + H(+). Its pathway is purine metabolism; IMP biosynthesis via de novo pathway; 5-amino-1-(5-phospho-D-ribosyl)imidazole from N(2)-formyl-N(1)-(5-phospho-D-ribosyl)glycinamide: step 1/2. Its function is as follows. Phosphoribosylformylglycinamidine synthase involved in the purines biosynthetic pathway. Catalyzes the ATP-dependent conversion of formylglycinamide ribonucleotide (FGAR) and glutamine to yield formylglycinamidine ribonucleotide (FGAM) and glutamate. The chain is Phosphoribosylformylglycinamidine synthase from Salmonella paratyphi A (strain ATCC 9150 / SARB42).